The primary structure comprises 344 residues: MKRRRSAKKSPAMVTVTDWKGLDCGEETRIVRRLMKFEDLPEYLKDNEFIHNHYRCQWSLKDTFLSAFSWHNETLNIWTHLIGFGIFLWMTVVSCLETTEISLAGVFNGMAGVRICLSSNQTLLHDSNVTHHISCLTSQGEAIPKWPWLVYLVGAMGCLICSSVSHLLACHSKRFNVFFWRLDYAGISLMIVASFFAPIYYAFSCHPNFRLLYLSSISILGLLAIITLLSPALSTPRFRPFRANLFLAMGSSAVIPATHVLCLYWDHPNVFIALGYEIATALSYFVGATFYVSRVPERWKPGAFDMAGHSHQIFHVFVVMGALAHCVTTLLIIDFSRASPSCGF.

At 1–76 the chain is on the cytoplasmic side; the sequence is MKRRRSAKKS…AFSWHNETLN (76 aa). The chain crosses the membrane as a helical span at residues 77–97; the sequence is IWTHLIGFGIFLWMTVVSCLE. Residues 98 to 147 are Extracellular-facing; sequence TTEISLAGVFNGMAGVRICLSSNQTLLHDSNVTHHISCLTSQGEAIPKWP. The chain crosses the membrane as a helical span at residues 148–168; sequence WLVYLVGAMGCLICSSVSHLL. At 169-184 the chain is on the cytoplasmic side; it reads ACHSKRFNVFFWRLDY. A helical membrane pass occupies residues 185–205; the sequence is AGISLMIVASFFAPIYYAFSC. The Extracellular portion of the chain corresponds to 206–210; it reads HPNFR. A helical membrane pass occupies residues 211 to 231; it reads LLYLSSISILGLLAIITLLSP. Residues 232-244 are Cytoplasmic-facing; the sequence is ALSTPRFRPFRAN. Residues 245–265 traverse the membrane as a helical segment; that stretch reads LFLAMGSSAVIPATHVLCLYW. Over 266-269 the chain is Extracellular; it reads DHPN. A helical membrane pass occupies residues 270-290; that stretch reads VFIALGYEIATALSYFVGATF. The Cytoplasmic portion of the chain corresponds to 291 to 312; sequence YVSRVPERWKPGAFDMAGHSHQ. Residues 313–333 traverse the membrane as a helical segment; it reads IFHVFVVMGALAHCVTTLLII. The Extracellular portion of the chain corresponds to 334–344; sequence DFSRASPSCGF.

It belongs to the ADIPOR family. Expressed in roots and flowers.

It localises to the membrane. May play a role in abiotic stress response. In Arabidopsis thaliana (Mouse-ear cress), this protein is Heptahelical transmembrane protein 3 (HHP3).